The primary structure comprises 205 residues: Thymidylate kinase (205 aa).

9–16 (GPEGSGKT) serves as a coordination point for ATP.

The protein belongs to the thymidylate kinase family.

It carries out the reaction dTMP + ATP = dTDP + ADP. In terms of biological role, phosphorylation of dTMP to form dTDP in both de novo and salvage pathways of dTTP synthesis. The chain is Thymidylate kinase from Staphylococcus aureus (strain MSSA476).